Reading from the N-terminus, the 647-residue chain is Solute carrier family 23 member 2 (647 aa).

Residues 1–11 (MMGVGKNTSKS) are compositionally biased toward polar residues. The tract at residues 1 to 26 (MMGVGKNTSKSVEVGGSTEGKYEEEA) is disordered. Topologically, residues 8-109 (TSKSVEVGGS…LCIFLGLQHY (102 aa)) are cytoplasmic. Position 69 is a phosphoserine (S69). T74 carries the post-translational modification Phosphothreonine. S77 is subject to Phosphoserine. At T78 the chain carries Phosphothreonine. S80 is modified (phosphoserine). Residues 110 to 130 (LTCFSGTIAVPFLLADAMCVG) traverse the membrane as a helical segment. Residues 131–138 (DDQWATSQ) are Extracellular-facing. A helical membrane pass occupies residues 139–159 (LIGTIFFCVGITTLLQTTFGC). R160 is a topological domain (cytoplasmic). The chain crosses the membrane as a helical span at residues 161–181 (LPLFQASAFAFLAPARAILSL). Residues 182–215 (DKWKCNTTEITVANGTAELLEHIWHPRIQEIQGA) lie on the Extracellular side of the membrane. N-linked (GlcNAc...) asparagine glycans are attached at residues N187 and N195. Residues 216-236 (IIMSSLIEVVIGLLGLPGALL) form a helical membrane-spanning segment. The Cytoplasmic portion of the chain corresponds to 237 to 263 (RYIGPLTITPTVALIGLSGFQAAGERA). A helical transmembrane segment spans residues 264-281 (GKHWGIAMLTIFLVLLFS). At 282–285 (QYAR) the chain is on the extracellular side. An intramembrane region (helical) is located at residues 286 to 299 (NVKFPLPIYKSKKG). The Extracellular portion of the chain corresponds to 300-306 (WTAYKLQ). A helical membrane pass occupies residues 307–327 (LFKMFPIILAILVSWLLCFIF). Residues 328–368 (TVTDVFPSNSTDYGYYARTDARKGVLLVAPWFKVPYPFQWG) are Cytoplasmic-facing. Residues 369 to 389 (MPTVSAAGVIGMLSAVVASII) traverse the membrane as a helical segment. Residues 390-414 (ESIGDYYACARLSCAPPPPIHAINR) are Extracellular-facing. The helical transmembrane segment at 415–435 (GIFVEGLSCVLDGVFGTGNGS) threads the bilayer. Over 436–458 (TSSSPNIGVLGITKVGSRRVIQY) the chain is Cytoplasmic. The helical transmembrane segment at 459–479 (GAALMLGLGMIGKFSALFASL) threads the bilayer. Residues 480-482 (PDP) lie on the Extracellular side of the membrane. The helical transmembrane segment at 483-503 (VLGALFCTLFGMITAVGLSNL) threads the bilayer. Over 504 to 513 (QFIDLNSSRN) the chain is Cytoplasmic. The chain crosses the membrane as a helical span at residues 514–534 (LFVLGFSIFFGLVLPSYLRQN). The Extracellular segment spans residues 535–544 (PLVTGITGID). The helical transmembrane segment at 545-565 (QVLNVLLTTAMFVGGCVAFIL) threads the bilayer. At 566–647 (DNTIPGTPEE…SSDKDSQATV (82 aa)) the chain is on the cytoplasmic side. The residue at position 646 (T646) is a Phosphothreonine.

It belongs to the nucleobase:cation symporter-2 (NCS2) (TC 2.A.40) family. As to quaternary structure, interacts with CLSTN3. Post-translationally, phosphorylated. In terms of tissue distribution, highly expressed in neural, neuroendocrine, exocrine and endothelial tissues and in osteoblasts. Detected in neurons throughout the central nervous system, in meninges and choroid plexus, in the anterior pituitary, the intermediate lobe, in pancreas, adrenal cortex, gastric glands, and in the inner nuclear layer of the retina.

The protein localises to the cell membrane. It catalyses the reaction L-ascorbate(out) + 2 Na(+)(out) = L-ascorbate(in) + 2 Na(+)(in). Sodium/ascorbate cotransporter. Mediates electrogenic uptake of vitamin C, with a stoichiometry of 2 Na(+) for each ascorbate. This Rattus norvegicus (Rat) protein is Solute carrier family 23 member 2 (Slc23a2).